Reading from the N-terminus, the 218-residue chain is uncharacterized protein (218 aa).

This is an uncharacterized protein from Acanthamoeba polyphaga (Amoeba).